The sequence spans 65 residues: Small ribosomal subunit protein eS27 (65 aa).

Zn(2+)-binding residues include cysteine 20, cysteine 23, cysteine 39, and cysteine 42. A C4-type zinc finger spans residues 20 to 42 (CIDCGNEQIVFSHPATRVRCLVC).

The protein belongs to the eukaryotic ribosomal protein eS27 family. Part of the 30S ribosomal subunit. Requires Zn(2+) as cofactor.

The polypeptide is Small ribosomal subunit protein eS27 (Pyrococcus horikoshii (strain ATCC 700860 / DSM 12428 / JCM 9974 / NBRC 100139 / OT-3)).